Here is a 133-residue protein sequence, read N- to C-terminus: Ribonuclease VapC29 (133 aa).

Residues 3–122 (VLLDANVLIA…TLDSGLAHLH (120 aa)) enclose the PINc domain. Mg(2+) is bound by residues Asp6 and Asp97.

This sequence belongs to the PINc/VapC protein family. Mg(2+) serves as cofactor.

Functionally, toxic component of a type II toxin-antitoxin (TA) system. Its cognate antitoxin is VapB29. Has ribonuclease activity. The chain is Ribonuclease VapC29 from Mycobacterium tuberculosis (strain CDC 1551 / Oshkosh).